The following is a 440-amino-acid chain: Xaa-Pro dipeptidase (440 aa).

Mn(2+)-binding residues include Asp-244, Asp-255, His-336, Glu-381, and Glu-420.

It belongs to the peptidase M24B family. Bacterial-type prolidase subfamily. Mn(2+) is required as a cofactor.

The catalysed reaction is Xaa-L-Pro dipeptide + H2O = an L-alpha-amino acid + L-proline. Splits dipeptides with a prolyl residue in the C-terminal position. This is Xaa-Pro dipeptidase from Pseudoalteromonas translucida (strain TAC 125).